Consider the following 277-residue polypeptide: Anamorsin homolog 2 (277 aa).

The tract at residues Met-1–Ser-141 is N-terminal SAM-like domain. A linker region spans residues Ser-141–Leu-186. Positions 197, 207, 210, and 212 each coordinate [2Fe-2S] cluster. Positions Cys-197–Cys-212 are fe-S binding site A. [4Fe-4S] cluster contacts are provided by Cys-238, Cys-241, Cys-249, and Cys-252. Short sequence motifs (cx2C motif) lie at residues Cys-238–Cys-241 and Cys-249–Cys-252. The interval Cys-238–Cys-252 is fe-S binding site B.

The protein belongs to the anamorsin family. Monomer. The cofactor is [2Fe-2S] cluster. It depends on [4Fe-4S] cluster as a cofactor.

The protein resides in the cytoplasm. It localises to the mitochondrion intermembrane space. Functionally, component of the cytosolic iron-sulfur (Fe-S) protein assembly (CIA) machinery. Required for the maturation of extramitochondrial Fe-S proteins. Part of an electron transfer chain functioning in an early step of cytosolic Fe-S biogenesis, facilitating the de novo assembly of a [4Fe-4S] cluster on the cytosolic Fe-S scaffold complex. Electrons are transferred from NADPH via a FAD- and FMN-containing diflavin oxidoreductase. Together with the diflavin oxidoreductase, also required for the assembly of the diferric tyrosyl radical cofactor of ribonucleotide reductase (RNR), probably by providing electrons for reduction during radical cofactor maturation in the catalytic small subunit. The chain is Anamorsin homolog 2 from Picea sitchensis (Sitka spruce).